A 462-amino-acid chain; its full sequence is Adenylosuccinate lyase (462 aa).

Residues 21-22, 87-89, and 114-115 each bind N(6)-(1,2-dicarboxyethyl)-AMP; these read RY, KHD, and TS. Catalysis depends on histidine 162, which acts as the Proton donor/acceptor. Residue glutamine 236 participates in N(6)-(1,2-dicarboxyethyl)-AMP binding. Serine 287 functions as the Proton donor/acceptor in the catalytic mechanism. N(6)-(1,2-dicarboxyethyl)-AMP contacts are provided by residues serine 288, 293–295, and 332–336; these read KRN and SAERC.

The protein belongs to the lyase 1 family. Adenylosuccinate lyase subfamily. In terms of assembly, homotetramer. Residues from neighboring subunits contribute catalytic and substrate-binding residues to each active site.

The enzyme catalyses N(6)-(1,2-dicarboxyethyl)-AMP = fumarate + AMP. It catalyses the reaction (2S)-2-[5-amino-1-(5-phospho-beta-D-ribosyl)imidazole-4-carboxamido]succinate = 5-amino-1-(5-phospho-beta-D-ribosyl)imidazole-4-carboxamide + fumarate. It participates in purine metabolism; AMP biosynthesis via de novo pathway; AMP from IMP: step 2/2. Its pathway is purine metabolism; IMP biosynthesis via de novo pathway; 5-amino-1-(5-phospho-D-ribosyl)imidazole-4-carboxamide from 5-amino-1-(5-phospho-D-ribosyl)imidazole-4-carboxylate: step 2/2. Its function is as follows. Catalyzes two reactions in de novo purine nucleotide biosynthesis. Catalyzes the breakdown of 5-aminoimidazole- (N-succinylocarboxamide) ribotide (SAICAR or 2-[5-amino-1-(5-phospho-beta-D-ribosyl)imidazole-4-carboxamido]succinate) to 5-aminoimidazole-4-carboxamide ribotide (AICAR or 5-amino-1-(5-phospho-beta-D-ribosyl)imidazole-4-carboxamide) and fumarate, and of adenylosuccinate (ADS or N(6)-(1,2-dicarboxyethyl)-AMP) to adenosine monophosphate (AMP) and fumarate. The polypeptide is Adenylosuccinate lyase (purB) (Methanocaldococcus jannaschii (strain ATCC 43067 / DSM 2661 / JAL-1 / JCM 10045 / NBRC 100440) (Methanococcus jannaschii)).